A 111-amino-acid chain; its full sequence is Cytochrome c oxidase subunit 7A2-like, mitochondrial (111 aa).

A mitochondrion-targeting transit peptide spans 1–54 (MYYKFSSFTQKLAGAWASEAYTPQGLKPVSTEAPPIIFATPTKLTSSVTAYDYS). At Lys-68 the chain carries N6-acetyllysine. The helical transmembrane segment at 79–104 (PDQMLYRTTMALTLGGTIYCLIALYM) threads the bilayer.

It belongs to the cytochrome c oxidase VIIa family.

It is found in the mitochondrion inner membrane. Its function is as follows. Non-functional protein. In contrast to the protein found in other strains (AC Q99KD6), cannot induce the assembly of mitochondrial respiratory supercomplexes. The protein is Cytochrome c oxidase subunit 7A2-like, mitochondrial of Mus musculus (Mouse).